Consider the following 251-residue polypeptide: Derlin-1 (251 aa).

Position 2 is an N-acetylserine (S2). The Cytoplasmic segment spans residues 2 to 15 (SDIGDWFRSIPTIT). The chain crosses the membrane as a helical span at residues 16-31 (RYWFAATVAVPLVGKL). Residues 32 to 69 (GLISPAYFFLWPEAFLYRFQIWRPITATFYFPVGPGTG) lie on the Lumenal side of the membrane. The helical transmembrane segment at 70-89 (FLYLVNLYFLYQYSTRLETG) threads the bilayer. The Cytoplasmic portion of the chain corresponds to 90 to 94 (AFDGR). A helical membrane pass occupies residues 95 to 115 (PADYLFMLLFNWICIVITGLA). At 116-122 (MDMQLLM) the chain is on the lumenal side. Residues 123-137 (IPLIMSVLYVWAQLN) form a helical membrane-spanning segment. At 138 to 154 (RDMIVSFWFGTRFKACY) the chain is on the cytoplasmic side. A helical transmembrane segment spans residues 155–166 (LPWVILGFNYII). Topologically, residues 167–170 (GGSV) are lumenal. The chain crosses the membrane as a helical span at residues 171-189 (INELIGNLVGHLYFFLMFR). At 190–251 (YPMDLGGRNF…WGQGFRLGDQ (62 aa)) the chain is on the cytoplasmic side. Phosphoserine is present on S201. Position 202 is a phosphothreonine (T202). Position 226 is a phosphoserine (S226). The interval 229 to 251 (RAADQNGGGGRHNWGQGFRLGDQ) is disordered. The SHP-box signature appears at 241–248 (NWGQGFRL).

It belongs to the derlin family. Homotetramer. The four subunits of the tetramer are arranged in a twofold symmetry. Forms homo- and heterooligomers with DERL2 and DERL3; binding to DERL3 is poorer than that between DERL2 and DERL3. Interacts (via SHP-box motif) with VCP. Interacts with AMFR, SELENOS, SEL1L, SELENOK and SYVN1, as well as with SEL1L-SYVN1 and VCP-SELENOS protein complexes; this interaction is weaker than that observed between DERL2 and these complexes. Interacts with NGLY1 and YOD1. Does not bind to EDEM1. Interacts with DNAJB9. Interacts with RNF103. Interacts with HM13. Interacts with XBP1 isoform 1 (via luminal/ectodomain domain); the interaction obviates the need for ectodomain shedding prior HM13/SPP-mediated XBP1 isoform 1 cleavage. Interacts with the signal recognition particle/SRP and the SRP receptor; in the process of endoplasmic reticulum stress-induced pre-emptive quality control. May interact with UBXN6. Interacts with ZFAND2B; probably through VCP. Interacts with CCDC47. Interacts with C18orf32. May interact with TRAM1. Forms a complex with SVIP and VCP/p97.

Its subcellular location is the endoplasmic reticulum membrane. In terms of biological role, functional component of endoplasmic reticulum-associated degradation (ERAD) for misfolded lumenal proteins. Forms homotetramers which encircle a large channel traversing the endoplasmic reticulum (ER) membrane. This allows the retrotranslocation of misfolded proteins from the ER into the cytosol where they are ubiquitinated and degraded by the proteasome. The channel has a lateral gate within the membrane which provides direct access to membrane proteins with no need to reenter the ER lumen first. May mediate the interaction between VCP and the misfolded protein. Also involved in endoplasmic reticulum stress-induced pre-emptive quality control, a mechanism that selectively attenuates the translocation of newly synthesized proteins into the endoplasmic reticulum and reroutes them to the cytosol for proteasomal degradation. By controlling the steady-state expression of the IGF1R receptor, indirectly regulates the insulin-like growth factor receptor signaling pathway. The polypeptide is Derlin-1 (Bos taurus (Bovine)).